The sequence spans 832 residues: MELRCGGLLFSSRFDSGNLAHVEKVETVPSDGEGVGGAATAPTSGSASSPDYEFNVWTRPDCAETEYENGNRSWFYFSVRGGTPGKLIKINIMNMNKQSKLYSQGMAPFVRTLPSRPRWERIRERPTFEMTETQFVLSFVHRFVEGRGATTFFAFCYPFSYSDCQDLLSQLDQRFPENYSAHSSPLDSIYYHRELLCYSLDGLRVDLLTITSCHGLRDDREPRLEQLFPDVGTPRPFRFTGKRIFFLSSRVHPGETPSSFVFNGFLDFILRPDDPRAQTLRRLFVFKLIPMLNPDGVVRGHYRTDSRGVNLNRQYLKPDAVLHPAIYGAKAVLLYHHVHSRLNSKNPSNQQPSSLHLPPEVPLSDLEKANNLHNELHLGQSPDGENHDRWTETEPTEEKTDPVWIMPQPIPELEEPAPDAIPPKESGVAYYVDLHGHASKRGCFMYGNSFSDESTQVENMLYPKLISLNSAHFDFQGCNFSEKNMYARDRRDGQSKEGSGRVAIYKASGIIHSYTLECNYNTGRSVNSIPAACHDNGRASPPPPPTFPSRYTVELFEQVGRALAIAALDMAECNPWPRIVLSEHSSLTNLRAWMLKHVRNSRGLTSTANVGLNKKRGSRTPPKSNNGLPVSCSENALSRARSFSTGTSTGGSSSQQNSPQMKNSPSFPFHGSRPAGLPGLGSSTQKVSHRVLGPVREPRCPDRRRRQQQQQQQQQQQQQQQQQPLNQRSTTSSLAPSPTLASASPTSSRNMGSCLLPNSLSLSGSSCPFSSSGDKPEAVMVIGKSLLGAGARIPCIRTRLQTCQRRVSARRGPGFPRLGPGWAGAHRRLAEG.

The disordered stretch occupies residues 27-50 (TVPSDGEGVGGAATAPTSGSASSP). Positions 38–50 (AATAPTSGSASSP) are enriched in low complexity. In terms of domain architecture, Peptidase M14 spans 157-571 (YPFSYSDCQD…ALAIAALDMA (415 aa)). 2 residues coordinate Zn(2+): H252 and E255. Residues 343–354 (NSKNPSNQQPSS) show a composition bias toward low complexity. Disordered stretches follow at residues 343-362 (NSKNPSNQQPSSLHLPPEVP) and 376-402 (LHLGQSPDGENHDRWTETEPTEEKTDP). The span at 384–401 (GENHDRWTETEPTEEKTD) shows a compositional bias: basic and acidic residues. Position 435 (H435) interacts with Zn(2+). The active-site Proton donor/acceptor is the E517. Residues 606–752 (STANVGLNKK…ASPTSSRNMG (147 aa)) are disordered. Residues 621 to 636 (PPKSNNGLPVSCSENA) are compositionally biased toward polar residues. Low complexity predominate over residues 644–654 (STGTSTGGSSS). Over residues 655-666 (QQNSPQMKNSPS) the composition is skewed to polar residues. The segment covering 708–752 (QQQQQQQQQQQQQQQQPLNQRSTTSSLAPSPTLASASPTSSRNMG) has biased composition (low complexity).

This sequence belongs to the peptidase M14 family. Zn(2+) serves as cofactor.

The protein resides in the cytoplasm. Its subcellular location is the cytosol. The protein localises to the nucleus. It is found in the cytoskeleton. It localises to the spindle. The protein resides in the midbody. The enzyme catalyses gamma-L-glutamyl-L-glutamyl-[protein] + H2O = L-glutamyl-[protein] + L-glutamate. It carries out the reaction (L-glutamyl)(n+1)-gamma-L-glutamyl-L-glutamyl-[protein] + H2O = (L-glutamyl)(n)-gamma-L-glutamyl-L-glutamyl-[protein] + L-glutamate. The catalysed reaction is C-terminal L-alpha-aminoacyl-L-glutamyl-[tubulin] + H2O = C-terminal L-alpha-aminoacyl-[tubulin] + L-glutamate. It catalyses the reaction C-terminal L-alpha-aminoacyl-L-glutamyl-L-glutamyl-[tubulin] + H2O = C-terminal L-alpha-aminoacyl-L-glutamyl-[tubulin] + L-glutamate. In terms of biological role, metallocarboxypeptidase that mediates deglutamylation of tubulin and non-tubulin target proteins. Catalyzes the removal of polyglutamate side chains present on the gamma-carboxyl group of glutamate residues within the C-terminal tail of alpha- and beta-tubulin. Cleaves alpha- and gamma-linked polyglutamate tubulin side-chain, as well as the branching point glutamate. Also catalyzes the removal of alpha-linked glutamate residues from the carboxy-terminus of alpha-tubulin. Mediates deglutamylation of nucleotidyltransferase CGAS, leading to CGAS antiviral defense response activation. The chain is Cytosolic carboxypeptidase-like protein 5 (Agbl5) from Rattus norvegicus (Rat).